The primary structure comprises 350 residues: Phenylalanine--tRNA ligase alpha subunit (350 aa).

Glu260 is a binding site for Mg(2+).

The protein belongs to the class-II aminoacyl-tRNA synthetase family. Phe-tRNA synthetase alpha subunit type 1 subfamily. As to quaternary structure, tetramer of two alpha and two beta subunits. The cofactor is Mg(2+).

It is found in the cytoplasm. It catalyses the reaction tRNA(Phe) + L-phenylalanine + ATP = L-phenylalanyl-tRNA(Phe) + AMP + diphosphate + H(+). In Mycoplasma capricolum subsp. capricolum (strain California kid / ATCC 27343 / NCTC 10154), this protein is Phenylalanine--tRNA ligase alpha subunit.